Reading from the N-terminus, the 148-residue chain is 3-dehydroquinate dehydratase (148 aa).

The Proton acceptor role is filled by Y23. Positions 75, 81, and 88 each coordinate substrate. H101 serves as the catalytic Proton donor. Residues 102-103 and R112 contribute to the substrate site; that span reads LS.

This sequence belongs to the type-II 3-dehydroquinase family. In terms of assembly, homododecamer.

The enzyme catalyses 3-dehydroquinate = 3-dehydroshikimate + H2O. It functions in the pathway metabolic intermediate biosynthesis; chorismate biosynthesis; chorismate from D-erythrose 4-phosphate and phosphoenolpyruvate: step 3/7. Functionally, catalyzes a trans-dehydration via an enolate intermediate. This Xylella fastidiosa (strain M23) protein is 3-dehydroquinate dehydratase.